Consider the following 245-residue polypeptide: CTD nuclear envelope phosphatase 1B (245 aa).

A helical transmembrane segment spans residues 7-29 (CLLGVRTFHGVTSRIWSFFLYIL). The FCP1 homology domain occupies 58–225 (NNVKRKILVL…LNLLPMLDAL (168 aa)).

The protein belongs to the dullard family.

Its subcellular location is the endoplasmic reticulum membrane. It is found in the nucleus membrane. It carries out the reaction O-phospho-L-seryl-[protein] + H2O = L-seryl-[protein] + phosphate. The enzyme catalyses O-phospho-L-threonyl-[protein] + H2O = L-threonyl-[protein] + phosphate. In terms of biological role, serine/threonine protein phosphatase that may dephosphorylate and activate lipins. Lipins are phosphatidate phosphatases that catalyze the conversion of phosphatidic acid to diacylglycerol and control the metabolism of fatty acids at different levels. May indirectly modulate the lipid composition of nuclear and/or endoplasmic reticulum membranes and be required for proper nuclear membrane morphology and/or dynamics. May also indirectly regulate the production of lipid droplets and triacylglycerol. May antagonize BMP signaling. The chain is CTD nuclear envelope phosphatase 1B (ctdnep1b) from Danio rerio (Zebrafish).